The following is a 114-amino-acid chain: Protein S100-A9 (114 aa).

T2 carries the blocked amino end (Thr) modification. Residue C3 is modified to S-nitrosocysteine; transient. EF-hand domains are found at residues 12–47 (IETI…DLQN) and 54–89 (KNEK…LTWA). H20 lines the Zn(2+) pocket. S23, L26, and H28 together coordinate Ca(2+). D30 is a binding site for Zn(2+). Positions 31, 36, 67, 69, 71, 73, and 78 each coordinate Ca(2+). H91 and H95 together coordinate Zn(2+). Basic and acidic residues predominate over residues 93-102 (KMHEGDEGPG). The segment at 93–114 (KMHEGDEGPGHHHKPGLGEGTP) is disordered. Position 105 is a pros-methylhistidine (H105). Phosphothreonine; by MAPK14 is present on T113.

As to quaternary structure, homodimer. Preferentially exists as a heterodimer or heterotetramer with S100A8 known as calprotectin (S100A8/A9). S100A9 interacts with ATP2A2. S100A9 interacts with AGER, and with the heterodimeric complex formed by TLR4 and LY96 in the presence of calcium and/or zinc ions. S100A9 binds quinoline-3-carboxamides in the presence of calcium and/or zinc ions. S100A9 interacts with amyloid-beta protein 40. Calprotectin (S100A8/9) interacts with CEACAM3 and tubulin filaments in a calcium-dependent manner. Heterotetrameric calprotectin (S100A8/A9) interacts with ANXA6 and associates with tubulin filaments in activated monocytes. Calprotectin (S100A8/9) interacts with NCF2/P67PHOX, RAC1, RAC2, CYBA and CYBB. Calprotectin (S100A8/9) interacts with NOS2 to form the iNOS-S100A8/A9 transnitrosylase complex; induced by LDL(ox). Calprotectin (S100A8/9) interacts with CD69. In terms of processing, phosphorylated. Phosphorylation inhibits activation of tubulin polymerization. Post-translationally, S-nitrosylation of Cys-3 is implicated in LDL(ox)-induced S-nitrosylation of GAPDH at 'Cys-247' through a transnitrosylase mechanism involving a iNOS-S100A8/9 complex. Methylation at His-105 by METTL9 reduces zinc-binding without affecting heterodimerization with S100A8. As to expression, calprotectin (S100A8/9) is predominantly expressed in myeloid cells. Except for inflammatory conditions, the expression is restricted to a specific stage of myeloid differentiation since both proteins are expressed in circulating neutrophils and monocytes but are absent in normal tissue macrophages and lymphocytes. Under chronic inflammatory conditions, such as psoriasis and malignant disorders, also expressed in the epidermis. Found in high concentrations at local sites of inflammation or in the serum of patients with inflammatory diseases such as rheumatoid, cystic fibrosis, inflammatory bowel disease, Crohn's disease, giant cell arteritis, cystic fibrosis, Sjogren's syndrome, systemic lupus erythematosus, and progressive systemic sclerosis. Involved in the formation and deposition of amyloids in the aging prostate known as corpora amylacea inclusions. Strongly up-regulated in many tumors, including gastric, esophageal, colon, pancreatic, bladder, ovarian, thyroid, breast and skin cancers.

The protein resides in the secreted. Its subcellular location is the cytoplasm. The protein localises to the cytoskeleton. It is found in the cell membrane. S100A9 is a calcium- and zinc-binding protein which plays a prominent role in the regulation of inflammatory processes and immune response. It can induce neutrophil chemotaxis, adhesion, can increase the bactericidal activity of neutrophils by promoting phagocytosis via activation of SYK, PI3K/AKT, and ERK1/2 and can induce degranulation of neutrophils by a MAPK-dependent mechanism. Predominantly found as calprotectin (S100A8/A9) which has a wide plethora of intra- and extracellular functions. The intracellular functions include: facilitating leukocyte arachidonic acid trafficking and metabolism, modulation of the tubulin-dependent cytoskeleton during migration of phagocytes and activation of the neutrophilic NADPH-oxidase. Also participates in regulatory T-cell differentiation together with CD69. Activates NADPH-oxidase by facilitating the enzyme complex assembly at the cell membrane, transferring arachidonic acid, an essential cofactor, to the enzyme complex and S100A8 contributes to the enzyme assembly by directly binding to NCF2/P67PHOX. The extracellular functions involve pro-inflammatory, antimicrobial, oxidant-scavenging and apoptosis-inducing activities. Its pro-inflammatory activity includes recruitment of leukocytes, promotion of cytokine and chemokine production, and regulation of leukocyte adhesion and migration. Acts as an alarmin or a danger associated molecular pattern (DAMP) molecule and stimulates innate immune cells via binding to pattern recognition receptors such as Toll-like receptor 4 (TLR4) and receptor for advanced glycation endproducts (AGER). Binding to TLR4 and AGER activates the MAP-kinase and NF-kappa-B signaling pathways resulting in the amplification of the pro-inflammatory cascade. Has antimicrobial activity towards bacteria and fungi and exerts its antimicrobial activity probably via chelation of Zn(2+) which is essential for microbial growth. Can induce cell death via autophagy and apoptosis and this occurs through the cross-talk of mitochondria and lysosomes via reactive oxygen species (ROS) and the process involves BNIP3. Can regulate neutrophil number and apoptosis by an anti-apoptotic effect; regulates cell survival via ITGAM/ITGB and TLR4 and a signaling mechanism involving MEK-ERK. Its role as an oxidant scavenger has a protective role in preventing exaggerated tissue damage by scavenging oxidants. Can act as a potent amplifier of inflammation in autoimmunity as well as in cancer development and tumor spread. Has transnitrosylase activity; in oxidatively-modified low-densitity lipoprotein (LDL(ox))-induced S-nitrosylation of GAPDH on 'Cys-247' proposed to transfer the NO moiety from NOS2/iNOS to GAPDH via its own S-nitrosylated Cys-3. The iNOS-S100A8/A9 transnitrosylase complex is proposed to also direct selective inflammatory stimulus-dependent S-nitrosylation of multiple targets such as ANXA5, EZR, MSN and VIM by recognizing a [IL]-x-C-x-x-[DE] motif. The protein is Protein S100-A9 of Homo sapiens (Human).